Reading from the N-terminus, the 436-residue chain is Histone acetyltransferase RTT109 (436 aa).

A Rtt109-type HAT domain is found at 2 to 404; it reads SLNDFLSSVL…LQSLTGKREH (403 aa). Acetyl-CoA is bound by residues 88–90 and 97–101; these read ADT and RVSVR. Positions 128-170 are interaction with VPS75; the sequence is RSYKKISPELISAASTPARTLRILARRLKQSGSTVLKEIESPR. Residues F192, A196, 211 to 213, and W221 each bind acetyl-CoA; that span reads HIL. Residue D288 is the Proton donor/acceptor of the active site. An N6-acetyllysine; by autocatalysis modification is found at K290. An interaction with ASF1 region spans residues 419-433; that stretch reads LAITMLKPRKKAKAL.

Belongs to the RTT109 family. As to quaternary structure, forms a complex composed of two RTT109 subunits and one VPS75 homodimer; each RTT109 subunit interacts predominantly with VPS75 instead of interacting with the other RTT109 subunit. Interacts with VPS75; the interaction is direct. Interacts (via C-terminus) with ASF1; the interaction is direct. Interacts with histone H3/H4 heterodimers via histone H3.

It localises to the nucleus. The catalysed reaction is L-lysyl-[histone] + acetyl-CoA = N(6)-acetyl-L-lysyl-[histone] + CoA + H(+). It catalyses the reaction L-lysyl-[protein] + acetyl-CoA = N(6)-acetyl-L-lysyl-[protein] + CoA + H(+). Its function is as follows. Histone chaperone-dependent acetylase that modifies 'Lys-9', 'Lys-14', 'Lys-23', 'Lys-27', and 'Lys-56' on histone H3 (H3K9Ac, H3K14Ac and H3K23Ac, H3K27Ac, and H3K56Ac) to promote nucleosome assembly, genomic stability, DNA repair and transcriptional regulation during mitotic S-phase. Its residue selectivity is influenced by the acetylation status of histone H3, and also the presence of histone chaperone ASF1 that shifts selectivity to 'Lys-56' when H3K14Ac is already present. H3K56 acetylation weakens the interaction between the histone core and the surrounding DNA in the nucleosomal particle and drives chromatin disassembly. Autoacetylates. Independently of acetyltransferase activity, stimulates histone deposition by VPS75. Involved in regulation of Ty1 transposition. This chain is Histone acetyltransferase RTT109, found in Saccharomyces cerevisiae (strain ATCC 204508 / S288c) (Baker's yeast).